The chain runs to 171 residues: Adenine phosphoribosyltransferase (171 aa).

The protein belongs to the purine/pyrimidine phosphoribosyltransferase family. As to quaternary structure, homodimer.

The protein localises to the cytoplasm. It carries out the reaction AMP + diphosphate = 5-phospho-alpha-D-ribose 1-diphosphate + adenine. Its pathway is purine metabolism; AMP biosynthesis via salvage pathway; AMP from adenine: step 1/1. Its function is as follows. Catalyzes a salvage reaction resulting in the formation of AMP, that is energically less costly than de novo synthesis. The sequence is that of Adenine phosphoribosyltransferase from Mycoplasma mobile (strain ATCC 43663 / 163K / NCTC 11711) (Mesomycoplasma mobile).